A 372-amino-acid polypeptide reads, in one-letter code: Long-tail fiber protein gp35 (372 aa).

One can recognise a GG-type lectin domain in the interval Asn-22–Thr-193.

As to quaternary structure, the long-tail fibers are trimeric, with a stoichiometry of gp34/gp37/gp36/gp35 of 3:3:3:1.

It localises to the virion. Its function is as follows. Structural component of the distal-half of the long-tail fiber. The long-tail fiber of T4 is about 1600 Angstroms long with a kink in the middle that divides the fiber into proximal and distal halves. The latter hinge is probably composed of gp35 protein. The protein is Long-tail fiber protein gp35 (35) of Enterobacteria phage T4 (Bacteriophage T4).